A 494-amino-acid chain; its full sequence is Guanosine-5'-triphosphate,3'-diphosphate pyrophosphatase (494 aa).

Belongs to the GppA/Ppx family. GppA subfamily.

It carries out the reaction guanosine 3'-diphosphate 5'-triphosphate + H2O = guanosine 3',5'-bis(diphosphate) + phosphate + H(+). The protein operates within purine metabolism; ppGpp biosynthesis; ppGpp from GTP: step 2/2. In terms of biological role, catalyzes the conversion of pppGpp to ppGpp. Guanosine pentaphosphate (pppGpp) is a cytoplasmic signaling molecule which together with ppGpp controls the 'stringent response', an adaptive process that allows bacteria to respond to amino acid starvation, resulting in the coordinated regulation of numerous cellular activities. This Shigella flexneri protein is Guanosine-5'-triphosphate,3'-diphosphate pyrophosphatase.